Here is a 798-residue protein sequence, read N- to C-terminus: Penicillin-binding protein 1A (798 aa).

Residues 1–9 (MIKKIMTTC) are Cytoplasmic-facing. A helical; Signal-anchor for type II membrane protein transmembrane segment spans residues 10-30 (FGLVFGLCVFAVGLLAIAILA). Topologically, residues 31–798 (TYPKLPSLDS…SKRQQLDSLF (768 aa)) are periplasmic. The segment at 50–218 (LTVYSADGKI…SAYNPIVNPE (169 aa)) is transglycosylase. Catalysis depends on glutamate 88, which acts as the Proton donor; for transglycosylase activity. The transpeptidase stretch occupies residues 378–700 (RRALGFAARA…GTIAVPVWVD (323 aa)). Serine 461 functions as the Acyl-ester intermediate; for transpeptidase activity in the catalytic mechanism. The tract at residues 739–798 (LMLDNGGAAPQPSRRVKEDDGGAAEGGRQEADDESRQDMQETPVLPSNTDSKRQQLDSLF) is disordered. Composition is skewed to basic and acidic residues over residues 765-777 (GRQEADDESRQDM) and 788-798 (DSKRQQLDSLF).

It in the N-terminal section; belongs to the glycosyltransferase 51 family. In the C-terminal section; belongs to the transpeptidase family.

Its subcellular location is the cell inner membrane. The enzyme catalyses [GlcNAc-(1-&gt;4)-Mur2Ac(oyl-L-Ala-gamma-D-Glu-L-Lys-D-Ala-D-Ala)](n)-di-trans,octa-cis-undecaprenyl diphosphate + beta-D-GlcNAc-(1-&gt;4)-Mur2Ac(oyl-L-Ala-gamma-D-Glu-L-Lys-D-Ala-D-Ala)-di-trans,octa-cis-undecaprenyl diphosphate = [GlcNAc-(1-&gt;4)-Mur2Ac(oyl-L-Ala-gamma-D-Glu-L-Lys-D-Ala-D-Ala)](n+1)-di-trans,octa-cis-undecaprenyl diphosphate + di-trans,octa-cis-undecaprenyl diphosphate + H(+). It catalyses the reaction Preferential cleavage: (Ac)2-L-Lys-D-Ala-|-D-Ala. Also transpeptidation of peptidyl-alanyl moieties that are N-acyl substituents of D-alanine.. It functions in the pathway cell wall biogenesis; peptidoglycan biosynthesis. In terms of biological role, cell wall formation. Synthesis of cross-linked peptidoglycan from the lipid intermediates. The enzyme has a penicillin-insensitive transglycosylase N-terminal domain (formation of linear glycan strands) and a penicillin-sensitive transpeptidase C-terminal domain (cross-linking of the peptide subunits). This Neisseria lactamica protein is Penicillin-binding protein 1A (mrcA).